The following is a 607-amino-acid chain: MTEQFDPSAFLSTCSGRPGVYRMFDSDARLLYVGKAKNLKNRLSSYFRKTGQAPKTAALVARIAQIETTITANETEALLLEQTLIKEWRPPYNILLRDDKSYPYVFLSDGDFPRFSIHRGAKKQKGKYFGPYPSAGAIRESLSLLQKTFMVRQCEDSYYKNRTRPCLQYQIKRCKAPCVGLVEPEVYAEDVRHSVMFLEGRSNALTDELSTAMEAAASTLDFEKAAELRDQISLLRRVQDQQSMEGGTGDVDVVAAFVNPGGACVHLISVRGGRVLGSKNFFPQVGIEEDVAEVMSAFLGQYFVSSPERDLPSELIVNVVHEDFPTLIAAIDELRGRELTISHRVRGTRARWQQLAVTNAEQALSARLANRQHVAARFEALAEVLNLDEPPQRLECYDISHSSGEATVASCVVFGPEGPLKSDYRRYNIEGVTAGDDYAAMHQALTRRFSKLKDGEGKLPDILLVDGGKGQLSMARDVLNELAVPDLILLGVAKGATRKAGFETLYLNDAAHEFTLKGDSPALHLIQQIRDEAHRFAITGHRARRGKTRRTSTLEGVAGVGPKRRRDLLKHFGGLQELSRASIDEIAKAPGISKKLAELIYANLHSE.

Residues 16–94 (GRPGVYRMFD…IKEWRPPYNI (79 aa)) enclose the GIY-YIG domain. Residues 203–238 (NALTDELSTAMEAAASTLDFEKAAELRDQISLLRRV) form the UVR domain.

The protein belongs to the UvrC family. Interacts with UvrB in an incision complex.

It is found in the cytoplasm. Functionally, the UvrABC repair system catalyzes the recognition and processing of DNA lesions. UvrC both incises the 5' and 3' sides of the lesion. The N-terminal half is responsible for the 3' incision and the C-terminal half is responsible for the 5' incision. The protein is UvrABC system protein C of Pseudomonas fluorescens (strain ATCC BAA-477 / NRRL B-23932 / Pf-5).